The following is a 343-amino-acid chain: Small ribosomal subunit biogenesis GTPase RsgA (343 aa).

The 160-residue stretch at 116–275 folds into the CP-type G domain; the sequence is RGQLKPVAAN…LIDSPGIREF (160 aa). Residues 163-166 and 217-225 each bind GTP; these read NKAD and GQSGVGKSS. 4 residues coordinate Zn(2+): Cys299, Cys304, His306, and Cys312.

It belongs to the TRAFAC class YlqF/YawG GTPase family. RsgA subfamily. In terms of assembly, monomer. Associates with 30S ribosomal subunit, binds 16S rRNA. The cofactor is Zn(2+).

It localises to the cytoplasm. In terms of biological role, one of several proteins that assist in the late maturation steps of the functional core of the 30S ribosomal subunit. Helps release RbfA from mature subunits. May play a role in the assembly of ribosomal proteins into the subunit. Circularly permuted GTPase that catalyzes slow GTP hydrolysis, GTPase activity is stimulated by the 30S ribosomal subunit. The chain is Small ribosomal subunit biogenesis GTPase RsgA from Pseudomonas syringae pv. tomato (strain ATCC BAA-871 / DC3000).